The sequence spans 656 residues: L-type lectin-domain containing receptor kinase S.1 (656 aa).

An N-terminal signal peptide occupies residues 1 to 29; that stretch reads MSWQWRRRQWPSPLLLILIVLHLVSSSSA. Residues 30 to 273 form a legume-lectin like region; it reads IDFLYNSFSS…ARRILAWSLS (244 aa). At 30–304 the chain is on the extracellular side; it reads IDFLYNSFSS…SSSLSTGAIA (275 aa). N-linked (GlcNAc...) asparagine glycosylation is found at Asn-42, Asn-63, Asn-121, Asn-139, Asn-191, Asn-219, Asn-282, and Asn-293. The helical transmembrane segment at 305-325 threads the bilayer; that stretch reads GIVIGCVVFVALIGFGGYLIW. Topologically, residues 326–656 are cytoplasmic; the sequence is KKLMREEEEE…AAADSTAAHA (331 aa). Positions 361–639 constitute a Protein kinase domain; that stretch reads FSNDRLLGSG…LLGSPQEDLL (279 aa). Residues 367–375 and Lys-389 contribute to the ATP site; that span reads LGSGGFGKV. The active-site Proton acceptor is the Asp-485.

It in the C-terminal section; belongs to the protein kinase superfamily. Ser/Thr protein kinase family. In the N-terminal section; belongs to the leguminous lectin family.

The protein localises to the cell membrane. It catalyses the reaction L-seryl-[protein] + ATP = O-phospho-L-seryl-[protein] + ADP + H(+). It carries out the reaction L-threonyl-[protein] + ATP = O-phospho-L-threonyl-[protein] + ADP + H(+). Functionally, involved in resistance response to the pathogenic oomycetes Phytophthora infestans and Phytophthora capsici and to the pathogenic bacteria Pseudomonas syringae. The polypeptide is L-type lectin-domain containing receptor kinase S.1 (Arabidopsis thaliana (Mouse-ear cress)).